We begin with the raw amino-acid sequence, 117 residues long: Large ribosomal subunit protein bL19 (117 aa).

It belongs to the bacterial ribosomal protein bL19 family.

Its function is as follows. This protein is located at the 30S-50S ribosomal subunit interface and may play a role in the structure and function of the aminoacyl-tRNA binding site. The protein is Large ribosomal subunit protein bL19 of Micrococcus luteus (strain ATCC 4698 / DSM 20030 / JCM 1464 / CCM 169 / CCUG 5858 / IAM 1056 / NBRC 3333 / NCIMB 9278 / NCTC 2665 / VKM Ac-2230) (Micrococcus lysodeikticus).